An 85-amino-acid polypeptide reads, in one-letter code: Phosphocarrier protein HPr (85 aa).

One can recognise an HPr domain in the interval 1 to 85 (MFQNQVKITA…HLSLIMTELE (85 aa)). The active-site Pros-phosphohistidine intermediate is the histidine 15.

The protein belongs to the HPr family.

The protein localises to the cytoplasm. Its function is as follows. General (non sugar-specific) component of the phosphoenolpyruvate-dependent sugar phosphotransferase system (sugar PTS). This major carbohydrate active-transport system catalyzes the phosphorylation of incoming sugar substrates concomitantly with their translocation across the cell membrane. The phosphoryl group from phosphoenolpyruvate (PEP) is transferred to the phosphoryl carrier protein HPr by enzyme I. Phospho-HPr then transfers it to the PTS EIIA domain. This Buchnera aphidicola subsp. Acyrthosiphon pisum (strain APS) (Acyrthosiphon pisum symbiotic bacterium) protein is Phosphocarrier protein HPr (ptsH).